The following is a 238-amino-acid chain: Large ribosomal subunit protein uL1 (238 aa).

This sequence belongs to the universal ribosomal protein uL1 family. In terms of assembly, part of the 50S ribosomal subunit.

Its function is as follows. Binds directly to 23S rRNA. The L1 stalk is quite mobile in the ribosome, and is involved in E site tRNA release. Functionally, protein L1 is also a translational repressor protein, it controls the translation of the L11 operon by binding to its mRNA. This is Large ribosomal subunit protein uL1 from Trichodesmium erythraeum (strain IMS101).